A 197-amino-acid polypeptide reads, in one-letter code: Holliday junction branch migration complex subunit RuvA (197 aa).

Residues 1-64 are domain I; that stretch reads MYEYIKGKYI…EDFIGVYGFL (64 aa). The tract at residues 65–144 is domain II; that stretch reads TKDELSMFKL…DILEEDDEQI (80 aa). Residues 145–149 are flexible linker; the sequence is INKVT. The segment at 149–197 is domain III; it reads TDDKKVLEAVAALVTLGYSEKEANKVINSCDKNNSLEQIIKEALKYLMK.

Belongs to the RuvA family. As to quaternary structure, homotetramer. Forms an RuvA(8)-RuvB(12)-Holliday junction (HJ) complex. HJ DNA is sandwiched between 2 RuvA tetramers; dsDNA enters through RuvA and exits via RuvB. An RuvB hexamer assembles on each DNA strand where it exits the tetramer. Each RuvB hexamer is contacted by two RuvA subunits (via domain III) on 2 adjacent RuvB subunits; this complex drives branch migration. In the full resolvosome a probable DNA-RuvA(4)-RuvB(12)-RuvC(2) complex forms which resolves the HJ.

It is found in the cytoplasm. The RuvA-RuvB-RuvC complex processes Holliday junction (HJ) DNA during genetic recombination and DNA repair, while the RuvA-RuvB complex plays an important role in the rescue of blocked DNA replication forks via replication fork reversal (RFR). RuvA specifically binds to HJ cruciform DNA, conferring on it an open structure. The RuvB hexamer acts as an ATP-dependent pump, pulling dsDNA into and through the RuvAB complex. HJ branch migration allows RuvC to scan DNA until it finds its consensus sequence, where it cleaves and resolves the cruciform DNA. The polypeptide is Holliday junction branch migration complex subunit RuvA (Clostridium botulinum (strain Kyoto / Type A2)).